Reading from the N-terminus, the 969-residue chain is RNA polymerase-associated protein RapA (969 aa).

In terms of domain architecture, Helicase ATP-binding spans Glu-162–Asp-339. Position 175 to 182 (Asp-175 to Thr-182) interacts with ATP. The DEAH box signature appears at Asp-285 to His-288. The Helicase C-terminal domain maps to Arg-492–Gly-663.

It belongs to the SNF2/RAD54 helicase family. RapA subfamily. In terms of assembly, interacts with the RNAP. Has a higher affinity for the core RNAP than for the holoenzyme. Its ATPase activity is stimulated by binding to RNAP.

Functionally, transcription regulator that activates transcription by stimulating RNA polymerase (RNAP) recycling in case of stress conditions such as supercoiled DNA or high salt concentrations. Probably acts by releasing the RNAP, when it is trapped or immobilized on tightly supercoiled DNA. Does not activate transcription on linear DNA. Probably not involved in DNA repair. The protein is RNA polymerase-associated protein RapA of Actinobacillus pleuropneumoniae serotype 5b (strain L20).